The chain runs to 115 residues: Transcription initiation factor IIA subunit 2 (115 aa).

It belongs to the TFIIA subunit 2 family. In terms of assembly, TFIIA is a heterodimer of the large unprocessed subunit 1 and a small subunit gamma.

Its subcellular location is the nucleus. Functionally, TFIIA is a component of the transcription machinery of RNA polymerase II and plays an important role in transcriptional activation. TFIIA in a complex with tbp mediates transcriptional activity. The protein is Transcription initiation factor IIA subunit 2 (gtf2a2) of Dictyostelium discoideum (Social amoeba).